An 81-amino-acid chain; its full sequence is Small ribosomal subunit protein uS17 (81 aa).

This sequence belongs to the universal ribosomal protein uS17 family. As to quaternary structure, part of the 30S ribosomal subunit.

In terms of biological role, one of the primary rRNA binding proteins, it binds specifically to the 5'-end of 16S ribosomal RNA. This chain is Small ribosomal subunit protein uS17, found in Hyphomonas neptunium (strain ATCC 15444).